The primary structure comprises 450 residues: Flavin-containing monooxygenase FMO GS-OX-like 3 (450 aa).

Gly-17–Gly-22 serves as a coordination point for FAD. Gly-215 to Ala-220 lines the NADP(+) pocket.

Belongs to the FMO family. It depends on FAD as a cofactor.

Catalyzes the conversion of methylthioalkyl glucosinolates of any chain length into methylsulfinylalkyl glucosinolates. The polypeptide is Flavin-containing monooxygenase FMO GS-OX-like 3 (Arabidopsis thaliana (Mouse-ear cress)).